Consider the following 364-residue polypeptide: Long-wave-sensitive opsin 1 (364 aa).

Over Met-1–Val-52 the chain is Extracellular. Residue Ser-22 is glycosylated (O-linked (GlcNAc) serine). An N-linked (GlcNAc...) asparagine glycan is attached at Asn-34. Residues Tyr-53–Ala-77 traverse the membrane as a helical segment. The Cytoplasmic segment spans residues Thr-78–Asn-89. A helical transmembrane segment spans residues Trp-90–Ile-115. The Extracellular portion of the chain corresponds to Tyr-116–Glu-129. Cysteines 126 and 203 form a disulfide. The chain crosses the membrane as a helical span at residues Gly-130–Trp-149. The Cytoplasmic portion of the chain corresponds to Glu-150–Leu-168. A helical membrane pass occupies residues Ala-169–Ser-192. Topologically, residues Arg-193–Ser-218 are extracellular. The helical transmembrane segment at Tyr-219–Ile-246 threads the bilayer. Residues Arg-247–Arg-268 are Cytoplasmic-facing. Residues Met-269–Ala-292 traverse the membrane as a helical segment. Topologically, residues Ala-293–His-300 are extracellular. A helical membrane pass occupies residues Pro-301–Met-325. Residue Lys-312 is modified to N6-(retinylidene)lysine. Topologically, residues Asn-326–Ala-364 are cytoplasmic.

Belongs to the G-protein coupled receptor 1 family. Opsin subfamily. Post-translationally, phosphorylated on some or all of the serine and threonine residues present in the C-terminal region. The three color pigments are found in the cone photoreceptor cells. Expressed in retina.

It is found in the membrane. Visual pigments are the light-absorbing molecules that mediate vision. They consist of an apoprotein, opsin, covalently linked to cis-retinal. The chain is Long-wave-sensitive opsin 1 (OPN1LW) from Felis catus (Cat).